The chain runs to 372 residues: Aminomethyltransferase (372 aa).

The protein belongs to the GcvT family. As to quaternary structure, the glycine cleavage system is composed of four proteins: P, T, L and H.

The catalysed reaction is N(6)-[(R)-S(8)-aminomethyldihydrolipoyl]-L-lysyl-[protein] + (6S)-5,6,7,8-tetrahydrofolate = N(6)-[(R)-dihydrolipoyl]-L-lysyl-[protein] + (6R)-5,10-methylene-5,6,7,8-tetrahydrofolate + NH4(+). The glycine cleavage system catalyzes the degradation of glycine. The protein is Aminomethyltransferase of Streptomyces coelicolor (strain ATCC BAA-471 / A3(2) / M145).